A 506-amino-acid chain; its full sequence is Steroid (22S)-hydroxylase (506 aa).

A helical transmembrane segment spans residues 12–32 (LLFFLPFILLALLTFYTTTVA). Cysteine 449 lines the heme pocket.

This sequence belongs to the cytochrome P450 family. Heme is required as a cofactor. In terms of tissue distribution, highly expressed in roots and leaf blades. Expressed in shoot apex, stems, leaf sheaths, inflorescences and flowers.

It localises to the membrane. The enzyme catalyses a C28-steroid + reduced [NADPH--hemoprotein reductase] + O2 = a (22S)-22-hydroxy C28-steroid + oxidized [NADPH--hemoprotein reductase] + H2O + H(+). It catalyses the reaction campesterol + reduced [NADPH--hemoprotein reductase] + O2 = (22S)-22-hydroxycampesterol + oxidized [NADPH--hemoprotein reductase] + H2O + H(+). It carries out the reaction campestanol + reduced [NADPH--hemoprotein reductase] + O2 = 6-deoxycathasterone + oxidized [NADPH--hemoprotein reductase] + H2O + H(+). Its pathway is plant hormone biosynthesis; brassinosteroid biosynthesis. Catalyzes the C22-alpha-hydroxylation step in brassinosteroid biosynthesis, which is the rate-limiting step in this biosynthetic pathway. Catalyzes the conversion of campesterol (CR) to (22S)-22-hydroxycampesterol (22-OHCR, 22-hydroxyCR) and of campestanol (CN) to 6-deoxycathasterone (6-deoxoCT). Required for auxin responses involved in the regulation of epidermal cells length of the lamina joint. The polypeptide is Steroid (22S)-hydroxylase (Oryza sativa subsp. japonica (Rice)).